A 259-amino-acid polypeptide reads, in one-letter code: Virulence plasmid ParA family protein pGP5-D (259 aa).

9–16 (FKGGTGKT) contacts ATP.

This sequence belongs to the ParA family.

This Chlamydia psittaci (Chlamydophila psittaci) protein is Virulence plasmid ParA family protein pGP5-D.